We begin with the raw amino-acid sequence, 416 residues long: MSVANEESYRPSKATDATTEAVPPPMSYPQLFARFLKFGLLAWGGPVAQIDMLRRELVDEERWISSKRFNKLLAVMQVLPGPEAHEICVHLGIRAKGRLGGVLAGLGFMLPGFLLMFALSWLYFQIEFVGTALGAAFLGVQAAVIALIVRAVHRIGEHILLDRWLWVIAIVCALAAIGRVDFWITLPAGGLVYALLVLNHRASALLVTLAAVALAAAVALWAAPTAKLVEAVVQGQASVLLIFASGLKAGLLTFGGAYTAIPFVRNDAVGRGWMTDGQFLDGLALSGVLPAPLIIFATFVGYVAGGPIGAVAMTVGVFLPAFAFSLIFYDRLEAVVENKRLHAFLDGVAAGVVGLIGATTIDLAQVTAERVPSLTVGMSIFAAGLAFLYAWKNKLNVVVVILAAGLAGWLVFPNQG.

Residues 1–21 (MSVANEESYRPSKATDATTEA) are disordered. Helical transmembrane passes span 99-119 (LGGVLAGLGFMLPGFLLMFAL), 128-148 (FVGTALGAAFLGVQAAVIALI), 160-177 (LLDRWLWVIAIVCALAAI), 181-198 (DFWITLPAGGLVYALLVL), 204-224 (ALLVTLAAVALAAAVALWAAP), 237-257 (ASVLLIFASGLKAGLLTFGGA), 283-303 (LALSGVLPAPLIIFATFVGYV), 308-328 (IGAVAMTVGVFLPAFAFSLIF), 341-361 (LHAFLDGVAAGVVGLIGATTI), 371-391 (VPSLTVGMSIFAAGLAFLYAW), and 395-415 (LNVVVVILAAGLAGWLVFPNQ).

The protein belongs to the chromate ion transporter (CHR) (TC 2.A.51) family.

The protein localises to the cell inner membrane. Its function is as follows. This protein reduces chromate accumulation and is essential for chromate resistance. This Pseudomonas aeruginosa protein is Chromate transport protein.